The following is a 493-amino-acid chain: Phenmedipham hydrolase (493 aa).

Ser-188 serves as the catalytic Acyl-ester intermediate. Active-site charge relay system residues include Glu-307 and His-402.

Belongs to the type-B carboxylesterase/lipase family. In terms of assembly, monomer.

Its function is as follows. May degrade the phenylcarbamate herbicides phenmedipham and desmedipham cometabolically by hydrolyzing their central carbamate linkages. Conveys resistance to the herbicide phenmedipham. This Pseudarthrobacter oxydans (Arthrobacter oxydans) protein is Phenmedipham hydrolase (pcd).